The sequence spans 327 residues: UPF0665 family protein C23C4.06c (327 aa).

The protein belongs to the UPF0665 family.

It is found in the cytoplasm. The protein localises to the nucleus. The polypeptide is UPF0665 family protein C23C4.06c (Schizosaccharomyces pombe (strain 972 / ATCC 24843) (Fission yeast)).